The chain runs to 94 residues: Pyrimidine/purine nucleoside phosphorylase (94 aa).

The protein belongs to the nucleoside phosphorylase PpnP family.

It carries out the reaction a purine D-ribonucleoside + phosphate = a purine nucleobase + alpha-D-ribose 1-phosphate. The enzyme catalyses adenosine + phosphate = alpha-D-ribose 1-phosphate + adenine. The catalysed reaction is cytidine + phosphate = cytosine + alpha-D-ribose 1-phosphate. It catalyses the reaction guanosine + phosphate = alpha-D-ribose 1-phosphate + guanine. It carries out the reaction inosine + phosphate = alpha-D-ribose 1-phosphate + hypoxanthine. The enzyme catalyses thymidine + phosphate = 2-deoxy-alpha-D-ribose 1-phosphate + thymine. The catalysed reaction is uridine + phosphate = alpha-D-ribose 1-phosphate + uracil. It catalyses the reaction xanthosine + phosphate = alpha-D-ribose 1-phosphate + xanthine. Its function is as follows. Catalyzes the phosphorolysis of diverse nucleosides, yielding D-ribose 1-phosphate and the respective free bases. Can use uridine, adenosine, guanosine, cytidine, thymidine, inosine and xanthosine as substrates. Also catalyzes the reverse reactions. The polypeptide is Pyrimidine/purine nucleoside phosphorylase (Aeromonas salmonicida (strain A449)).